A 257-amino-acid chain; its full sequence is Probable S-adenosylmethionine-dependent methyltransferase MSMEG_2350/MSMEI_2290 (257 aa).

Belongs to the methyltransferase superfamily.

Functionally, probable S-adenosylmethionine-dependent methyltransferase required for the 6-O-methylation of the polysaccharide backbone of 6-O-methylglucosyl lipopolysaccharides (MGLP). This is Probable S-adenosylmethionine-dependent methyltransferase MSMEG_2350/MSMEI_2290 from Mycolicibacterium smegmatis (strain ATCC 700084 / mc(2)155) (Mycobacterium smegmatis).